Reading from the N-terminus, the 1147-residue chain is Myosin light chain kinase, smooth muscle (1147 aa).

Positions 1 to 41 are actin-binding; sequence MDFRANLQRQVKPKTVSEEERKVHSPQQVDFRSVLAKKGTP. A disordered region spans residues 1 to 330; that stretch reads MDFRANLQRQ…PPASPGTAPT (330 aa). Positions 26–41 are calmodulin-binding; sequence PQQVDFRSVLAKKGTP. Residues 43–55 are compositionally biased toward pro residues; sequence TPVPEKAPPPKPA. A run of 2 repeats spans residues 100-111 and 112-123. The interval 100–288 is 16 X 12 AA tandem repeats; that stretch reads SLKPVANAKP…KAVANAKPAE (189 aa). The 3; truncated repeat unit spans residues 124–132; the sequence is TLKPVANAE. A run of 13 repeats spans residues 133-144, 145-156, 157-168, 169-180, 181-192, 193-204, 205-216, 217-228, 229-240, 241-252, 253-264, 265-276, and 277-288. Positions 292–692 are actin-binding (calcium/calmodulin-insensitive); it reads PAGKEELKKE…TVTVNTEQKV (401 aa). Over residues 293 to 320 the composition is skewed to basic and acidic residues; that stretch reads AGKEELKKEVQNDVNCKREKAGAADNEK. Ig-like C2-type domains follow at residues 329 to 417 and 469 to 557; these read PTFK…CHVT and PQIP…VNLT. The cysteines at positions 350 and 401 are disulfide-linked. 2 disordered regions span residues 424–476 and 644–678; these read SENA…QFPE and SEPS…KEPE. Over residues 459-472 the composition is skewed to pro residues; sequence PKTPPKAATPPQIP. A Fibronectin type-III domain is found at 565 to 657; that stretch reads PAGTPCASDI…QESELTTVGE (93 aa). Polar residues predominate over residues 644 to 653; that stretch reads SEPSQESELT. Over residues 662 to 677 the composition is skewed to acidic residues; sequence PKDEVEEVSDDDEKEP. Position 670 is a phosphoserine (serine 670). A Phosphotyrosine; by ABL1 modification is found at tyrosine 681. One can recognise a Protein kinase domain in the interval 696 to 951; it reads YDIEERLGSG…CTQCLQHPWL (256 aa). Residues 702-710 and lysine 725 contribute to the ATP site; that span reads LGSGKFGQV. Tyrosine 807 is modified (phosphotyrosine; by ABL1). The active-site Proton acceptor is aspartate 817. Tyrosine 867 is subject to Phosphotyrosine; by ABL1. The segment at 943–1006 is calmodulin-binding; the sequence is TQCLQHPWLM…SGLSGRKSST (64 aa). A phosphoserine mark is found at serine 991, serine 992, serine 1004, serine 1005, and serine 1008. A disordered region spans residues 999-1019; the sequence is LSGRKSSTGSPTSPLTAERLE. Residues 1002 to 1013 show a composition bias toward polar residues; that stretch reads RKSSTGSPTSPL. Residue threonine 1010 is modified to Phosphothreonine. Serine 1011 is subject to Phosphoserine. Residues 1041-1130 form the Ig-like C2-type 3 domain; it reads PYFSKTIRDL…GEATCTAELI (90 aa). Residues cysteine 1062 and cysteine 1114 are joined by a disulfide bond.

It belongs to the protein kinase superfamily. CAMK Ser/Thr protein kinase family. All isoforms including Telokin bind calmodulin. Interacts with SVIL. Interacts with CTTN; this interaction is reduced during thrombin-induced endothelial cell (EC) contraction but is promoted by the barrier-protective agonist sphingosine 1-phosphate (S1P) within lamellipodia. A complex made of ABL1, CTTN and MYLK regulates cortical actin-based cytoskeletal rearrangement critical to sphingosine 1-phosphate (S1P)-mediated endothelial cell (EC) barrier enhancement. Binds to NAA10/ARD1 and PTK2B/PYK2. It depends on Mg(2+) as a cofactor. Requires Ca(2+) as cofactor. In terms of processing, the C-terminus is deglutamylated by AGTPBP1/CCP1, AGBL1/CCP4 and AGBL4/CCP6, leading to the formation of Myosin light chain kinase, smooth muscle, deglutamylated form. The consequences of C-terminal deglutamylation are unknown. Post-translationally, can probably be down-regulated by phosphorylation. Tyrosine phosphorylation by ABL1 increases kinase activity, reverses MLCK-mediated inhibition of Arp2/3-mediated actin polymerization, and enhances CTTN-binding. Phosphorylation by SRC promotes CTTN binding. As to expression, isoform Telokin is found in all smooth muscle tested except the aorta. It is not present in non-muscle tissue.

The protein resides in the cytoplasm. Its subcellular location is the cell projection. The protein localises to the lamellipodium. It is found in the cleavage furrow. It localises to the cytoskeleton. The protein resides in the stress fiber. The catalysed reaction is L-seryl-[myosin light chain] + ATP = O-phospho-L-seryl-[myosin light chain] + ADP + H(+). It carries out the reaction L-threonyl-[myosin light chain] + ATP = O-phospho-L-threonyl-[myosin light chain] + ADP + H(+). All catalytically active isoforms require binding to calcium and calmodulin for activation. Functionally, calcium/calmodulin-dependent myosin light chain kinase implicated in smooth muscle contraction via phosphorylation of myosin light chains (MLC). Also regulates actin-myosin interaction through a non-kinase activity. Phosphorylates PTK2B/PYK2 and myosin light-chains. Involved in the inflammatory response (e.g. apoptosis, vascular permeability, leukocyte diapedesis), cell motility and morphology, airway hyperreactivity and other activities relevant to asthma. Required for tonic airway smooth muscle contraction that is necessary for physiological and asthmatic airway resistance. Necessary for gastrointestinal motility. Implicated in the regulation of endothelial as well as vascular permeability, probably via the regulation of cytoskeletal rearrangements. In the nervous system it has been shown to control the growth initiation of astrocytic processes in culture and to participate in transmitter release at synapses formed between cultured sympathetic ganglion cells. Critical participant in signaling sequences that result in fibroblast apoptosis. Plays a role in the regulation of epithelial cell survival. Required for epithelial wound healing, especially during actomyosin ring contraction during purse-string wound closure. Mediates RhoA-dependent membrane blebbing. Triggers TRPC5 channel activity in a calcium-dependent signaling, by inducing its subcellular localization at the plasma membrane. Promotes cell migration (including tumor cells) and tumor metastasis. PTK2B/PYK2 activation by phosphorylation mediates ITGB2 activation and is thus essential to trigger neutrophil transmigration during acute lung injury (ALI). May regulate optic nerve head astrocyte migration. Probably involved in mitotic cytoskeletal regulation. Regulates tight junction probably by modulating ZO-1 exchange in the perijunctional actomyosin ring. Mediates burn-induced microvascular barrier injury; triggers endothelial contraction in the development of microvascular hyperpermeability by phosphorylating MLC. Essential for intestinal barrier dysfunction. Mediates Giardia spp.-mediated reduced epithelial barrier function during giardiasis intestinal infection via reorganization of cytoskeletal F-actin and tight junctional ZO-1. Necessary for hypotonicity-induced Ca(2+) entry and subsequent activation of volume-sensitive organic osmolyte/anion channels (VSOAC) in cervical cancer cells. The chain is Myosin light chain kinase, smooth muscle (MYLK) from Oryctolagus cuniculus (Rabbit).